Here is a 222-residue protein sequence, read N- to C-terminus: Glutathione S-transferase 3 (222 aa).

One can recognise a GST N-terminal domain in the interval 2–83 (APLKLYGMPL…YIASKYASEG (82 aa)). Glutathione-binding positions include Ser-12, 13 to 14 (PN), 41 to 42 (HK), 54 to 55 (QI), and 67 to 68 (ES). A GST C-terminal domain is found at 89 to 219 (ATASAAKLEV…AAIPLPPPPS (131 aa)).

Belongs to the GST superfamily. Phi family. In terms of assembly, homodimer.

The enzyme catalyses RX + glutathione = an S-substituted glutathione + a halide anion + H(+). Conjugation of reduced glutathione to a wide number of exogenous and endogenous hydrophobic electrophiles. Involved in the detoxification of certain herbicides. In Zea mays (Maize), this protein is Glutathione S-transferase 3.